Consider the following 157-residue polypeptide: MQFTTIASLFAAAGLAAAAPLESRQDTASCPVTTEGDYVWKISEFYGRKPEGTYYNSLGFNIKATNGGTLDFTCSAQADKLEDHKWYSCGENSFMDFSFDSDRSGLLLKQKVSDDITYVATATLPNYCRAGGNGPKDFVCQGVADAYITLVTLPKSS.

Residues 1 to 18 (MQFTTIASLFAAAGLAAA) form the signal peptide. One can recognise an AA1-like domain in the interval 35–153 (EGDYVWKISE…ADAYITLVTL (119 aa)). 2 disulfides stabilise this stretch: Cys-74–Cys-89 and Cys-128–Cys-140.

This sequence belongs to the ALTA1 family. As to quaternary structure, homodimer; disulfide-linked.

It is found in the spore wall. The protein localises to the secreted. Its function is as follows. May bind and inhibit the beta-glucanase activity of host plant thaumatin-like proteins. This is Major allergen Alt a 1 (ALTA1) from Alternaria alternata (Alternaria rot fungus).